Here is a 251-residue protein sequence, read N- to C-terminus: MLIIPAIDLKDGHCVRLEQGEMDKATVFSEDPAAMARRWKEHGARRLHLVDLNGAFAGKPVNDAAIQAIVEAVGDEMPVQLGGGIRDLATIERYLDDGVRYVIIGTAAVKNPGFLHEACDAFPGHVMVGLDARDGKVAVEGWSKLTGHDVVDLAKRFEGYGVEAVIYTDIGRDGMLTGVNIDATQRLAQALSIPVIASGGVTNLDDVRGLSAVAKDGIIGAITGRAIYQGTLDFAEAQKLADELAGGVFGV.

The active-site Proton acceptor is the Asp-8. The active-site Proton donor is Asp-131.

It belongs to the HisA/HisF family.

It is found in the cytoplasm. The catalysed reaction is 1-(5-phospho-beta-D-ribosyl)-5-[(5-phospho-beta-D-ribosylamino)methylideneamino]imidazole-4-carboxamide = 5-[(5-phospho-1-deoxy-D-ribulos-1-ylimino)methylamino]-1-(5-phospho-beta-D-ribosyl)imidazole-4-carboxamide. It functions in the pathway amino-acid biosynthesis; L-histidine biosynthesis; L-histidine from 5-phospho-alpha-D-ribose 1-diphosphate: step 4/9. The polypeptide is 1-(5-phosphoribosyl)-5-[(5-phosphoribosylamino)methylideneamino] imidazole-4-carboxamide isomerase (Thiobacillus denitrificans (strain ATCC 25259 / T1)).